We begin with the raw amino-acid sequence, 201 residues long: Small ribosomal subunit protein uS4c (201 aa).

The tract at residues 15–44 is disordered; sequence LGALPGLTNKRPRAGSDLRNQSRSGKKSQY. One can recognise an S4 RNA-binding domain in the interval 89–150; sequence MRLDNILFRL…EQKSKVLIQN (62 aa).

Belongs to the universal ribosomal protein uS4 family. As to quaternary structure, part of the 30S ribosomal subunit. Contacts protein S5. The interaction surface between S4 and S5 is involved in control of translational fidelity.

The protein localises to the plastid. Its subcellular location is the chloroplast. One of the primary rRNA binding proteins, it binds directly to 16S rRNA where it nucleates assembly of the body of the 30S subunit. In terms of biological role, with S5 and S12 plays an important role in translational accuracy. The polypeptide is Small ribosomal subunit protein uS4c (rps4) (Lactuca sativa (Garden lettuce)).